The primary structure comprises 796 residues: Volume-regulated anion channel subunit LRRC8E (796 aa).

The Cytoplasmic segment spans residues 1 to 22 (MIPVAEFKQFTEQQPAFKVLKP). A helical transmembrane segment spans residues 23 to 43 (WWDVLAEYLTVAMLMIGVFGC). Over 44–116 (TLQVTQDKII…YETALHWYAK (73 aa)) the chain is Extracellular. Cysteine 54 and cysteine 301 are disulfide-bonded. The N-linked (GlcNAc...) asparagine glycan is linked to asparagine 63. Residues 117 to 137 (YFPYLVVIHTLIFMVCTSFWF) traverse the membrane as a helical segment. At 138-265 (KFPGTSSKIE…IRQTVLKVCK (128 aa)) the chain is on the cytoplasmic side. A helical transmembrane segment spans residues 266-286 (FLAILVYNLVYVEKISFLVAC). The Extracellular portion of the chain corresponds to 287-313 (RVETSEVTGYASFCCNHTKAHLFSKLA). Asparagine 302 carries N-linked (GlcNAc...) asparagine glycosylation. Residues 314–334 (FCYISFVCIYGLTCIYTLYWL) traverse the membrane as a helical segment. Residues 335–796 (FHRPLKEYSF…AEVRDKMEEE (462 aa)) are Cytoplasmic-facing. 11 LRR repeats span residues 508–529 (GLEELHLEGLFPQELARAATLE), 536–557 (QLKVLSLRSNAGKVPASVTDVA), 559–579 (HLQRLSLHNDGARLVALNSLK), 583–604 (ALRELELVACGLERIPHAVFSL), 606–627 (ALQELDLKDNHLRSIEEILSFQ), 631–652 (KLVTLRLWHNQIAYVPEHVRKL), 654–675 (SLEQLYLSYNKLETLPSQLGLC), 677–698 (GLRLLDVSHNGLHSLPPEVGLL), 700–721 (NLQHLALSYNALEALPEELFFC), 723–744 (KLRTLLLGDNQLSQLSPHVGAL), and 746–767 (ALSRLELKGNRLEALPEELGNC).

This sequence belongs to the LRRC8 family. As to quaternary structure, heterohexamer; oligomerizes with other LRRC8 proteins (LRRC8A, LRRC8C, LRRC8D and/or LRRC8B) to form a heterohexamer. In vivo, the subunit composition may depend primarily on expression levels, and heterooligomeric channels containing various proportions of the different LRRC8 proteins may coexist.

It is found in the cell membrane. The protein resides in the endoplasmic reticulum membrane. The protein localises to the lysosome membrane. The enzyme catalyses chloride(in) = chloride(out). The catalysed reaction is iodide(out) = iodide(in). It catalyses the reaction taurine(out) = taurine(in). It carries out the reaction 2',3'-cGAMP(out) = 2',3'-cGAMP(in). Non-essential component of the volume-regulated anion channel (VRAC, also named VSOAC channel), an anion channel required to maintain a constant cell volume in response to extracellular or intracellular osmotic changes. The VRAC channel conducts iodide better than chloride and can also conduct organic osmolytes like taurine. Mediates efflux of amino acids, such as aspartate, in response to osmotic stress. The VRAC channel also mediates transport of immunoreactive cyclic dinucleotide GMP-AMP (2'-3'-cGAMP), an immune messenger produced in response to DNA virus in the cytosol. Channel activity requires LRRC8A plus at least one other family member (LRRC8B, LRRC8C, LRRC8D or LRRC8E); channel characteristics depend on the precise subunit composition. Also plays a role in lysosome homeostasis by forming functional lysosomal VRAC channels in response to low cytoplasmic ionic strength condition: lysosomal VRAC channels are necessary for the formation of large lysosome-derived vacuoles, which store and then expel excess water to maintain cytosolic water homeostasis. The protein is Volume-regulated anion channel subunit LRRC8E of Homo sapiens (Human).